Consider the following 74-residue polypeptide: Translation initiation factor IF-1 (74 aa).

The S1-like domain maps to 1–72; it reads MGKEDVIRME…TRGRIVYRKK (72 aa).

This sequence belongs to the IF-1 family. In terms of assembly, component of the 30S ribosomal translation pre-initiation complex which assembles on the 30S ribosome in the order IF-2 and IF-3, IF-1 and N-formylmethionyl-tRNA(fMet); mRNA recruitment can occur at any time during PIC assembly.

It is found in the cytoplasm. One of the essential components for the initiation of protein synthesis. Stabilizes the binding of IF-2 and IF-3 on the 30S subunit to which N-formylmethionyl-tRNA(fMet) subsequently binds. Helps modulate mRNA selection, yielding the 30S pre-initiation complex (PIC). Upon addition of the 50S ribosomal subunit IF-1, IF-2 and IF-3 are released leaving the mature 70S translation initiation complex. In Thermotoga petrophila (strain ATCC BAA-488 / DSM 13995 / JCM 10881 / RKU-1), this protein is Translation initiation factor IF-1.